The following is a 295-amino-acid chain: tRNA pseudouridine synthase A (295 aa).

D67 (nucleophile) is an active-site residue. Y125 contacts substrate.

The protein belongs to the tRNA pseudouridine synthase TruA family. Homodimer.

It catalyses the reaction uridine(38/39/40) in tRNA = pseudouridine(38/39/40) in tRNA. Functionally, formation of pseudouridine at positions 38, 39 and 40 in the anticodon stem and loop of transfer RNAs. The protein is tRNA pseudouridine synthase A of Prochlorococcus marinus (strain MIT 9303).